We begin with the raw amino-acid sequence, 169 residues long: Peptide deformylase (169 aa).

Fe cation is bound by residues Cys91 and His133. Glu134 is an active-site residue. His137 lines the Fe cation pocket.

The protein belongs to the polypeptide deformylase family. Requires Fe(2+) as cofactor.

The catalysed reaction is N-terminal N-formyl-L-methionyl-[peptide] + H2O = N-terminal L-methionyl-[peptide] + formate. Functionally, removes the formyl group from the N-terminal Met of newly synthesized proteins. Requires at least a dipeptide for an efficient rate of reaction. N-terminal L-methionine is a prerequisite for activity but the enzyme has broad specificity at other positions. This chain is Peptide deformylase, found in Enterobacter sp. (strain 638).